The following is a 417-amino-acid chain: Serine hydroxymethyltransferase (417 aa).

Residues L121 and G125 to L127 contribute to the (6S)-5,6,7,8-tetrahydrofolate site. The residue at position 229 (K229) is an N6-(pyridoxal phosphate)lysine. Residue S354–F356 participates in (6S)-5,6,7,8-tetrahydrofolate binding.

It belongs to the SHMT family. Homodimer. The cofactor is pyridoxal 5'-phosphate.

The protein resides in the cytoplasm. It carries out the reaction (6R)-5,10-methylene-5,6,7,8-tetrahydrofolate + glycine + H2O = (6S)-5,6,7,8-tetrahydrofolate + L-serine. It participates in one-carbon metabolism; tetrahydrofolate interconversion. It functions in the pathway amino-acid biosynthesis; glycine biosynthesis; glycine from L-serine: step 1/1. In terms of biological role, catalyzes the reversible interconversion of serine and glycine with tetrahydrofolate (THF) serving as the one-carbon carrier. This reaction serves as the major source of one-carbon groups required for the biosynthesis of purines, thymidylate, methionine, and other important biomolecules. Also exhibits THF-independent aldolase activity toward beta-hydroxyamino acids, producing glycine and aldehydes, via a retro-aldol mechanism. The chain is Serine hydroxymethyltransferase from Azotobacter vinelandii (strain DJ / ATCC BAA-1303).